Consider the following 318-residue polypeptide: Methionyl-tRNA formyltransferase (318 aa).

112–115 lines the (6S)-5,6,7,8-tetrahydrofolate pocket; that stretch reads SILP.

The protein belongs to the Fmt family.

The catalysed reaction is L-methionyl-tRNA(fMet) + (6R)-10-formyltetrahydrofolate = N-formyl-L-methionyl-tRNA(fMet) + (6S)-5,6,7,8-tetrahydrofolate + H(+). In terms of biological role, attaches a formyl group to the free amino group of methionyl-tRNA(fMet). The formyl group appears to play a dual role in the initiator identity of N-formylmethionyl-tRNA by promoting its recognition by IF2 and preventing the misappropriation of this tRNA by the elongation apparatus. The polypeptide is Methionyl-tRNA formyltransferase (Shewanella sp. (strain MR-7)).